A 243-amino-acid chain; its full sequence is Small ribosomal subunit protein uS3 (243 aa).

One can recognise a KH type-2 domain in the interval I39–R107. The interval A214–A243 is disordered. Residues S229–A243 show a composition bias toward basic and acidic residues.

The protein belongs to the universal ribosomal protein uS3 family. In terms of assembly, part of the 30S ribosomal subunit. Forms a tight complex with proteins S10 and S14.

Its function is as follows. Binds the lower part of the 30S subunit head. Binds mRNA in the 70S ribosome, positioning it for translation. This is Small ribosomal subunit protein uS3 from Agrobacterium fabrum (strain C58 / ATCC 33970) (Agrobacterium tumefaciens (strain C58)).